Consider the following 600-residue polypeptide: Alanine--tRNA ligase (600 aa).

His-463, His-467, Cys-565, and His-569 together coordinate Zn(2+).

It belongs to the class-II aminoacyl-tRNA synthetase family. Zn(2+) serves as cofactor.

It localises to the cytoplasm. It carries out the reaction tRNA(Ala) + L-alanine + ATP = L-alanyl-tRNA(Ala) + AMP + diphosphate. In terms of biological role, catalyzes the attachment of alanine to tRNA(Ala) in a two-step reaction: alanine is first activated by ATP to form Ala-AMP and then transferred to the acceptor end of tRNA(Ala). Also edits incorrectly charged Ser-tRNA(Ala) and Gly-tRNA(Ala) via its editing domain. The polypeptide is Alanine--tRNA ligase (alaS) (Treponema denticola (strain ATCC 35405 / DSM 14222 / CIP 103919 / JCM 8153 / KCTC 15104)).